The following is a 300-amino-acid chain: 4-hydroxy-tetrahydrodipicolinate synthase (300 aa).

A pyruvate-binding site is contributed by Thr-57. The Proton donor/acceptor role is filled by Tyr-145. The Schiff-base intermediate with substrate role is filled by Lys-173. Ile-213 is a binding site for pyruvate.

It belongs to the DapA family. In terms of assembly, homotetramer; dimer of dimers.

The protein resides in the cytoplasm. The enzyme catalyses L-aspartate 4-semialdehyde + pyruvate = (2S,4S)-4-hydroxy-2,3,4,5-tetrahydrodipicolinate + H2O + H(+). Its pathway is amino-acid biosynthesis; L-lysine biosynthesis via DAP pathway; (S)-tetrahydrodipicolinate from L-aspartate: step 3/4. Its function is as follows. Catalyzes the condensation of (S)-aspartate-beta-semialdehyde [(S)-ASA] and pyruvate to 4-hydroxy-tetrahydrodipicolinate (HTPA). The sequence is that of 4-hydroxy-tetrahydrodipicolinate synthase from Corynebacterium urealyticum (strain ATCC 43042 / DSM 7109).